Here is a 274-residue protein sequence, read N- to C-terminus: Probable ribosomal RNA small subunit methyltransferase A (274 aa).

Positions 22, 24, 50, 71, 99, and 114 each coordinate S-adenosyl-L-methionine.

This sequence belongs to the class I-like SAM-binding methyltransferase superfamily. rRNA adenine N(6)-methyltransferase family. RsmA subfamily.

The protein resides in the cytoplasm. Specifically dimethylates two adjacent adenosines in the loop of a conserved hairpin near the 3'-end of 16S rRNA in the 30S particle. May play a critical role in biogenesis of 30S subunits. In Natronomonas pharaonis (strain ATCC 35678 / DSM 2160 / CIP 103997 / JCM 8858 / NBRC 14720 / NCIMB 2260 / Gabara) (Halobacterium pharaonis), this protein is Probable ribosomal RNA small subunit methyltransferase A.